A 341-amino-acid chain; its full sequence is S-adenosylmethionine:tRNA ribosyltransferase-isomerase (341 aa).

It belongs to the QueA family. Monomer.

The protein localises to the cytoplasm. The enzyme catalyses 7-aminomethyl-7-carbaguanosine(34) in tRNA + S-adenosyl-L-methionine = epoxyqueuosine(34) in tRNA + adenine + L-methionine + 2 H(+). It participates in tRNA modification; tRNA-queuosine biosynthesis. Functionally, transfers and isomerizes the ribose moiety from AdoMet to the 7-aminomethyl group of 7-deazaguanine (preQ1-tRNA) to give epoxyqueuosine (oQ-tRNA). The protein is S-adenosylmethionine:tRNA ribosyltransferase-isomerase of Chlorobium chlorochromatii (strain CaD3).